The chain runs to 264 residues: Protein hob3 (264 aa).

One can recognise a BAR domain in the interval 17-237 (VMMKTGHVER…FDNSVREDYS (221 aa)). Coiled coils occupy residues 25 to 65 (ERTV…AMTA) and 165 to 187 (RTEK…LVSE).

Its subcellular location is the cytoplasm. The protein resides in the cytoskeleton. Involved in cytokinesis and septation where it has a role in the localization of F-actin. The polypeptide is Protein hob3 (hob3) (Schizosaccharomyces pombe (strain 972 / ATCC 24843) (Fission yeast)).